A 445-amino-acid chain; its full sequence is Phosphoglucosamine mutase (445 aa).

Serine 102 functions as the Phosphoserine intermediate in the catalytic mechanism. Mg(2+) contacts are provided by serine 102, aspartate 241, aspartate 243, and aspartate 245. At serine 102 the chain carries Phosphoserine.

Belongs to the phosphohexose mutase family. Mg(2+) is required as a cofactor. Activated by phosphorylation.

The catalysed reaction is alpha-D-glucosamine 1-phosphate = D-glucosamine 6-phosphate. Catalyzes the conversion of glucosamine-6-phosphate to glucosamine-1-phosphate. The chain is Phosphoglucosamine mutase from Shigella flexneri serotype 5b (strain 8401).